The chain runs to 243 residues: 1-(5-phosphoribosyl)-5-[(5-phosphoribosylamino)methylideneamino] imidazole-4-carboxamide isomerase (243 aa).

Asp17 (proton acceptor) is an active-site residue. The active-site Proton donor is the Asp138.

The protein belongs to the HisA/HisF family.

The protein localises to the cytoplasm. It catalyses the reaction 1-(5-phospho-beta-D-ribosyl)-5-[(5-phospho-beta-D-ribosylamino)methylideneamino]imidazole-4-carboxamide = 5-[(5-phospho-1-deoxy-D-ribulos-1-ylimino)methylamino]-1-(5-phospho-beta-D-ribosyl)imidazole-4-carboxamide. The protein operates within amino-acid biosynthesis; L-histidine biosynthesis; L-histidine from 5-phospho-alpha-D-ribose 1-diphosphate: step 4/9. This Deinococcus geothermalis (strain DSM 11300 / CIP 105573 / AG-3a) protein is 1-(5-phosphoribosyl)-5-[(5-phosphoribosylamino)methylideneamino] imidazole-4-carboxamide isomerase.